The primary structure comprises 24 residues: Lactadherin (24 aa).

The protein localises to the membrane. Its subcellular location is the secreted. It localises to the cytoplasmic vesicle. It is found in the secretory vesicle. The protein resides in the acrosome membrane. In terms of biological role, specific ligand for the alpha-v/beta-3 and alpha-v/beta-5 receptors. Also binds to phosphatidylserine-enriched cell surfaces in a receptor-independent manner. Zona pellucida-binding protein which may play a role in gamete interaction. Contributes to phagocytic removal of apoptotic cells in many tissues. Plays an important role in the maintenance of intestinal epithelial homeostasis and the promotion of mucosal healing. Promotes VEGF-dependent neovascularization. The protein is Lactadherin of Equus asinus (Donkey).